The following is a 347-amino-acid chain: NADH-ubiquinone oxidoreductase chain 2 (347 aa).

Helical transmembrane passes span 3–23 (PMIFIILLATIMLGSSIVMMS), 25–45 (HWFMTWLGFEMNMMAIVPVLM), 59–79 (YFLTQATASMILMLAIIINLM), 96–116 (MLITIALVMKLGLAPFHFWVP), 122–142 (IPLSSGLILLTWQKIAPLSLL), 149–169 (INMELFLTMSLLSIVIGGWGG), 201–221 (SFLNLLVYILMTSSMFALLIF), 239–259 (IIATMSLIILLSLGGLPPLTG), 274–294 (NSTILPTLMAISALLNLFFYI), and 326–346 (ILPLITISTLALPLTPLFLML).

Belongs to the complex I subunit 2 family. As to quaternary structure, core subunit of respiratory chain NADH dehydrogenase (Complex I) which is composed of 45 different subunits. Interacts with TMEM242.

The protein resides in the mitochondrion inner membrane. The catalysed reaction is a ubiquinone + NADH + 5 H(+)(in) = a ubiquinol + NAD(+) + 4 H(+)(out). Functionally, core subunit of the mitochondrial membrane respiratory chain NADH dehydrogenase (Complex I) that is believed to belong to the minimal assembly required for catalysis. Complex I functions in the transfer of electrons from NADH to the respiratory chain. The immediate electron acceptor for the enzyme is believed to be ubiquinone. In Crocidura hildegardeae (Hildegarde's shrew), this protein is NADH-ubiquinone oxidoreductase chain 2.